A 351-amino-acid chain; its full sequence is MTIDAALAEQIRRTPKAELHVHIEGTLEPELIFRLAQRNQVALPYPSVEALRAAYAFTDLQSFLDIYYAGASVLLTEEDFFDMTMDYVKRAVADNVRHAEIFFDPQTHTARGVPIGVVIDGIADALAQARTEYDFSSSLILCFLRHLPEEDAFATLEAALPYRDRFVGVGLDSSERGNPPEKFARVFARARELGLHLVAHAGEEGPAQYVTDALDILKAQRIDHGVRAIDDPALVERLARERVALTVCPLSNVKLKVYPDLRDHPLKRMLDAGVVITLHSDDPAYFGGYMNANWEATFEALPLDAADAHKLARNSFEAAFLPAMQKAEFLAEVDHFWSSPPKSPPATAPAA.

3 residues coordinate Zn(2+): His-20, His-22, and His-200. The active-site Proton donor is the Glu-203. Position 281 (Asp-281) interacts with Zn(2+). Asp-282 is a substrate binding site.

This sequence belongs to the metallo-dependent hydrolases superfamily. Adenosine and AMP deaminases family. Adenine deaminase type 2 subfamily. Zn(2+) serves as cofactor.

The catalysed reaction is adenine + H2O + H(+) = hypoxanthine + NH4(+). Its function is as follows. Catalyzes the hydrolytic deamination of adenine to hypoxanthine. Plays an important role in the purine salvage pathway and in nitrogen catabolism. This chain is Adenine deaminase, found in Cupriavidus necator (strain ATCC 17699 / DSM 428 / KCTC 22496 / NCIMB 10442 / H16 / Stanier 337) (Ralstonia eutropha).